Consider the following 562-residue polypeptide: MSQSKYRQLDVRAPRGTTLTARSWLTEAPLRMLMNNLDPDVAENPHELVVYGGIGRAARNWECYDAIVKALKNLESDETLLVQSGKPVGVFKTHENSPRVLIANSNLVPHWATWEHFNELDAKGLAMYGQMTAGSWIYIGSQGIVQGTYETFVEAGRQHYQGSLKGRWVLTAGLGGMGGAQPLAATLAGACSLNIECQQSRIDFRLRTRYVDEQATSLDDALARIKKYTAEGRAISIALCGNAADIVPELVKRGVRPDMVTDQTSAHDPLHGYLPKGWSWEEYQQKAESDPQGTILAAKRSMADHVQAMLAFNEMGVPTFDYGNNIRQMAQEMGVSNAFDFPGFVPAYIRPLFCRGIGPFRWVALSGDPQDIYKTDAKVKEIIKDDKHLHHWLDMARERISFQGLPARICWVGLEWRQKLGLAFNEMVRSGEVSAPIVIGRDHLDSGSVASPNRETEAMRDGSDAVSDWPLLNALLNTASGATWVSLHHGGGVGMGFSQHSGMVIVCDGTDEAAARIARVLRNDPATGVMRHADAGYDIAIECAAEQGLNLPMVAATQGNAK.

Residues 52-53 (GG), Gln-130, 176-178 (GMG), Glu-196, Arg-201, 242-243 (NA), 263-267 (QTSAH), 273-274 (YL), and Tyr-322 each bind NAD(+). Cys-410 is an active-site residue. Gly-492 lines the NAD(+) pocket.

It belongs to the urocanase family. Requires NAD(+) as cofactor.

Its subcellular location is the cytoplasm. It catalyses the reaction 4-imidazolone-5-propanoate = trans-urocanate + H2O. It functions in the pathway amino-acid degradation; L-histidine degradation into L-glutamate; N-formimidoyl-L-glutamate from L-histidine: step 2/3. In terms of biological role, catalyzes the conversion of urocanate to 4-imidazolone-5-propionate. In Klebsiella pneumoniae (strain 342), this protein is Urocanate hydratase.